The sequence spans 73 residues: Pelophylaxin-1 (73 aa).

An N-terminal signal peptide occupies residues 1–22 (MFTMKKSLLLVFFLGTIALSLC). Residues 23 to 41 (EEERGADDDNGGEITDEEI) constitute a propeptide that is removed on maturation. A disulfide bridge connects residues Cys67 and Cys73.

Expressed by the skin glands.

The protein resides in the secreted. In terms of biological role, antimicrobial peptide. This is Pelophylaxin-1 from Pelophylax fukienensis (Fukien gold-striped pond frog).